Consider the following 38-residue polypeptide: Photosystem II reaction center protein M (38 aa).

A helical transmembrane segment spans residues 7–27 (GFVASILFVLVPSVFLIILYI).

It belongs to the PsbM family. In terms of assembly, PSII is composed of 1 copy each of membrane proteins PsbA, PsbB, PsbC, PsbD, PsbE, PsbF, PsbH, PsbI, PsbJ, PsbK, PsbL, PsbM, PsbT, PsbX, PsbY, PsbZ, Psb30/Ycf12, peripheral proteins PsbO, CyanoQ (PsbQ), PsbU, PsbV and a large number of cofactors. It forms dimeric complexes.

Its subcellular location is the cellular thylakoid membrane. In terms of biological role, one of the components of the core complex of photosystem II (PSII). PSII is a light-driven water:plastoquinone oxidoreductase that uses light energy to abstract electrons from H(2)O, generating O(2) and a proton gradient subsequently used for ATP formation. It consists of a core antenna complex that captures photons, and an electron transfer chain that converts photonic excitation into a charge separation. This subunit is found at the monomer-monomer interface. This is Photosystem II reaction center protein M from Nostoc sp. (strain PCC 7120 / SAG 25.82 / UTEX 2576).